A 281-amino-acid polypeptide reads, in one-letter code: 2-dehydro-3-deoxyphosphooctonate aldolase (281 aa).

Belongs to the KdsA family.

Its subcellular location is the cytoplasm. It carries out the reaction D-arabinose 5-phosphate + phosphoenolpyruvate + H2O = 3-deoxy-alpha-D-manno-2-octulosonate-8-phosphate + phosphate. The protein operates within carbohydrate biosynthesis; 3-deoxy-D-manno-octulosonate biosynthesis; 3-deoxy-D-manno-octulosonate from D-ribulose 5-phosphate: step 2/3. Its pathway is bacterial outer membrane biogenesis; lipopolysaccharide biosynthesis. This chain is 2-dehydro-3-deoxyphosphooctonate aldolase, found in Pseudomonas syringae pv. tomato (strain ATCC BAA-871 / DC3000).